Reading from the N-terminus, the 2523-residue chain is Non-reducing polyketide synthase Preu3 (2523 aa).

Residues 58–247 are N-terminal acylcarrier protein transacylase domain (SAT); sequence LQSLASERRA…KILAMTGSFH (190 aa). The region spanning 373-792 is the Ketosynthase family 3 (KS3) domain; it reads DNAVAVVGMA…GSNGAMIVCQ (420 aa). Active-site for beta-ketoacyl synthase activity residues include C539, H674, and H715. The segment at 900 to 1207 is malonyl-CoA:ACP transacylase (MAT) domain; the sequence is CFGGQVKAFV…KAFGSLADAT (308 aa). Catalysis depends on S986, which acts as the For acyl/malonyl transferase activity. Positions 1271–1398 are N-terminal hotdog fold; it reads HELLTFSSFE…GLVAFGGTVE (128 aa). A PKS/mFAS DH domain is found at 1271-1573; it reads HELLTFSSFE…FTRVTVPGLR (303 aa). The segment at 1301-1568 is product template (PT) domain; it reads LVKGHAVVAQ…ALGCRFTRVT (268 aa). H1305 serves as the catalytic Proton acceptor; for dehydratase activity. A C-terminal hotdog fold region spans residues 1421-1573; the sequence is ECDALRGSAT…FTRVTVPGLR (153 aa). The active-site Proton donor; for dehydratase activity is the D1483. A disordered region spans residues 1579–1601; the sequence is ANGDARAQERPSGSRISPSPLAP. A Carrier domain is found at 1639 to 1713; that stretch reads VDYLAQVKAL…KLAEYLAKTL (75 aa). Position 1673 is an O-(pantetheine 4'-phosphoryl)serine (S1673). Residues 1735-1757 form a disordered region; it reads DAEQSSDESPYDSTDDSASGYGD. The span at 1738–1749 shows a compositional bias: acidic residues; sequence QSSDESPYDSTD. The interval 1986 to 2085 is methyltransferase (CMeT) domain; sequence LEIGGGTGGT…MRQLLSSEGF (100 aa). The thioesterase (TE) domain stretch occupies residues 2218-2520; that stretch reads LILHGGGHVL…RALEWLVEQC (303 aa).

It depends on pantetheine 4'-phosphate as a cofactor.

The catalysed reaction is 3 malonyl-CoA + acetyl-CoA + S-adenosyl-L-methionine + H(+) = 3-methylorsellinate + S-adenosyl-L-homocysteine + 3 CO2 + 4 CoA. Non-reducing polyketide synthase; part of a gene cluster that mediates the biosynthesis of a yet unidentified natural product. The first step in the pathway is performed by Preu3 that condenses one acetyl-CoA starter unit with 3 malonyl-CoA units. Preu3 also catalyzes one methylation step to produce 3-methylorsellinate, an intermediate that exhibits significant antibacterial activities against methicillin-resistant Staphylococcus aureus, multidrug-resistant Enterococcus faecalis, multidrug-resistant Enterococcus faecium, and multidrug-resistant Staphylococcus epidermidis. In Preussia isomera (Coprophilous fungus), this protein is Non-reducing polyketide synthase Preu3.